The sequence spans 225 residues: ATP-dependent Clp protease proteolytic subunit (225 aa).

The active-site Nucleophile is S123. The active site involves H148.

This sequence belongs to the peptidase S14 family. As to quaternary structure, fourteen ClpP subunits assemble into 2 heptameric rings which stack back to back to give a disk-like structure with a central cavity, resembling the structure of eukaryotic proteasomes.

Its subcellular location is the cytoplasm. It carries out the reaction Hydrolysis of proteins to small peptides in the presence of ATP and magnesium. alpha-casein is the usual test substrate. In the absence of ATP, only oligopeptides shorter than five residues are hydrolyzed (such as succinyl-Leu-Tyr-|-NHMec, and Leu-Tyr-Leu-|-Tyr-Trp, in which cleavage of the -Tyr-|-Leu- and -Tyr-|-Trp bonds also occurs).. Its function is as follows. Cleaves peptides in various proteins in a process that requires ATP hydrolysis. Has a chymotrypsin-like activity. Plays a major role in the degradation of misfolded proteins. The polypeptide is ATP-dependent Clp protease proteolytic subunit (Chlorobaculum tepidum (strain ATCC 49652 / DSM 12025 / NBRC 103806 / TLS) (Chlorobium tepidum)).